The primary structure comprises 504 residues: ATP synthase subunit alpha, chloroplastic (504 aa).

170-177 provides a ligand contact to ATP; the sequence is GDRQTGKT. Position 257 is a phosphothreonine (Thr257).

The protein belongs to the ATPase alpha/beta chains family. F-type ATPases have 2 components, CF(1) - the catalytic core - and CF(0) - the membrane proton channel. CF(1) has five subunits: alpha(3), beta(3), gamma(1), delta(1), epsilon(1). CF(0) has four main subunits: a, b, b' and c.

The protein localises to the plastid. It localises to the chloroplast thylakoid membrane. It catalyses the reaction ATP + H2O + 4 H(+)(in) = ADP + phosphate + 5 H(+)(out). In terms of biological role, produces ATP from ADP in the presence of a proton gradient across the membrane. The alpha chain is a regulatory subunit. The sequence is that of ATP synthase subunit alpha, chloroplastic from Nasturtium officinale (Watercress).